Here is a 309-residue protein sequence, read N- to C-terminus: tRNA dimethylallyltransferase (309 aa).

9-16 contacts ATP; the sequence is GPTAVGKT. 11 to 16 serves as a coordination point for substrate; it reads TAVGKT. The interaction with substrate tRNA stretch occupies residues 34 to 37; that stretch reads DSMQ.

This sequence belongs to the IPP transferase family. Monomer. The cofactor is Mg(2+).

The catalysed reaction is adenosine(37) in tRNA + dimethylallyl diphosphate = N(6)-dimethylallyladenosine(37) in tRNA + diphosphate. In terms of biological role, catalyzes the transfer of a dimethylallyl group onto the adenine at position 37 in tRNAs that read codons beginning with uridine, leading to the formation of N6-(dimethylallyl)adenosine (i(6)A). The sequence is that of tRNA dimethylallyltransferase from Clostridium acetobutylicum (strain ATCC 824 / DSM 792 / JCM 1419 / IAM 19013 / LMG 5710 / NBRC 13948 / NRRL B-527 / VKM B-1787 / 2291 / W).